Reading from the N-terminus, the 267-residue chain is Aspartate/glutamate leucyltransferase (267 aa).

Positions Glu246–Glu267 are disordered.

The protein belongs to the R-transferase family. Bpt subfamily.

It is found in the cytoplasm. It catalyses the reaction N-terminal L-glutamyl-[protein] + L-leucyl-tRNA(Leu) = N-terminal L-leucyl-L-glutamyl-[protein] + tRNA(Leu) + H(+). The catalysed reaction is N-terminal L-aspartyl-[protein] + L-leucyl-tRNA(Leu) = N-terminal L-leucyl-L-aspartyl-[protein] + tRNA(Leu) + H(+). Its function is as follows. Functions in the N-end rule pathway of protein degradation where it conjugates Leu from its aminoacyl-tRNA to the N-termini of proteins containing an N-terminal aspartate or glutamate. The polypeptide is Aspartate/glutamate leucyltransferase (Granulibacter bethesdensis (strain ATCC BAA-1260 / CGDNIH1)).